The chain runs to 95 residues: Acylphosphatase (95 aa).

One can recognise an Acylphosphatase-like domain in the interval 5–93 (RAHVFIRGKV…GEFKDFKILP (89 aa)). Residues Arg20 and Asn38 contribute to the active site.

The protein belongs to the acylphosphatase family.

It carries out the reaction an acyl phosphate + H2O = a carboxylate + phosphate + H(+). The polypeptide is Acylphosphatase (acyP) (Pyrobaculum aerophilum (strain ATCC 51768 / DSM 7523 / JCM 9630 / CIP 104966 / NBRC 100827 / IM2)).